The sequence spans 321 residues: Prephenate dehydratase (321 aa).

Residues 3-189 (RIAYLGPEGT…ARTRFVLVGR (187 aa)) form the Prephenate dehydratase domain. Positions 203-280 (SAVLRIDNQP…ADVRYLGSWP (78 aa)) constitute an ACT domain.

Homodimer.

The catalysed reaction is prephenate + H(+) = 3-phenylpyruvate + CO2 + H2O. Its pathway is amino-acid biosynthesis; L-phenylalanine biosynthesis; phenylpyruvate from prephenate: step 1/1. The chain is Prephenate dehydratase (pheA) from Mycobacterium bovis (strain ATCC BAA-935 / AF2122/97).